A 267-amino-acid chain; its full sequence is Membrane-spanning 4-domains subfamily A member 10 (267 aa).

Residues 1–56 (MAGQAPTAVPGSVTGEVSRWQNLGPAQPAQKVAQPQNLVPDGHLEKALEGSDLLQK) lie on the Cytoplasmic side of the membrane. Residues 57 to 77 (LGGFHIAIAFAHLAFGGYLIS) traverse the membrane as a helical segment. Topologically, residues 78–83 (TVKNLH) are extracellular. Residues 84 to 104 (LVVLKCWYPLWGTVSFLVAGM) traverse the membrane as a helical segment. The Cytoplasmic segment spans residues 105-118 (AAMTTVTFPKTSLK). The chain crosses the membrane as a helical span at residues 119 to 139 (VLCVIANVISLFCALAGFFVI). Topologically, residues 140–168 (AKDLFLEGPFPWPIWRPYPEPTTYIQRLE) are extracellular. A helical transmembrane segment spans residues 169–189 (LTLFCFTFLEIFLSGSTAITA). Topologically, residues 190–267 (YRMKRLQAED…LHTGPRTLRK (78 aa)) are cytoplasmic.

Belongs to the MS4A family. In terms of tissue distribution, expressed in thymus, kidney, colon, brain and testis. Expressed also by various hematopoietic and lymphoblastoid cell lines.

The protein localises to the membrane. In terms of biological role, may be involved in signal transduction as a component of a multimeric receptor complex. This chain is Membrane-spanning 4-domains subfamily A member 10 (Ms4a10), found in Mus musculus (Mouse).